A 514-amino-acid polypeptide reads, in one-letter code: 2-isopropylmalate synthase (514 aa).

The Pyruvate carboxyltransferase domain maps to 5-267; that stretch reads LVIFDTTLRD…DTRIHTPEIL (263 aa). Residues D14, H202, H204, and N238 each contribute to the Mn(2+) site. The tract at residues 394–514 is regulatory domain; that stretch reads RLVALKVGTQ…GSKEHPQAHV (121 aa).

This sequence belongs to the alpha-IPM synthase/homocitrate synthase family. LeuA type 1 subfamily. In terms of assembly, homodimer. Requires Mn(2+) as cofactor.

The protein resides in the cytoplasm. The catalysed reaction is 3-methyl-2-oxobutanoate + acetyl-CoA + H2O = (2S)-2-isopropylmalate + CoA + H(+). It participates in amino-acid biosynthesis; L-leucine biosynthesis; L-leucine from 3-methyl-2-oxobutanoate: step 1/4. Catalyzes the condensation of the acetyl group of acetyl-CoA with 3-methyl-2-oxobutanoate (2-ketoisovalerate) to form 3-carboxy-3-hydroxy-4-methylpentanoate (2-isopropylmalate). The protein is 2-isopropylmalate synthase of Hydrogenovibrio crunogenus (strain DSM 25203 / XCL-2) (Thiomicrospira crunogena).